We begin with the raw amino-acid sequence, 31 residues long: Photosystem II reaction center protein T (31 aa).

Residues 3-23 form a helical membrane-spanning segment; it reads ALVYTFLLVGTLGIIFFSIFF.

The protein belongs to the PsbT family. As to quaternary structure, PSII is composed of 1 copy each of membrane proteins PsbA, PsbB, PsbC, PsbD, PsbE, PsbF, PsbH, PsbI, PsbJ, PsbK, PsbL, PsbM, PsbT, PsbY, PsbZ, Psb30/Ycf12, at least 3 peripheral proteins of the oxygen-evolving complex and a large number of cofactors. It forms dimeric complexes.

Its subcellular location is the plastid. The protein localises to the chloroplast thylakoid membrane. In terms of biological role, found at the monomer-monomer interface of the photosystem II (PS II) dimer, plays a role in assembly and dimerization of PSII. PSII is a light-driven water plastoquinone oxidoreductase, using light energy to abstract electrons from H(2)O, generating a proton gradient subsequently used for ATP formation. This is Photosystem II reaction center protein T from Chlamydomonas reinhardtii (Chlamydomonas smithii).